The following is a 356-amino-acid chain: Heme A synthase (356 aa).

The next 5 helical transmembrane spans lie at 23-43 (IAIW…VGGV), 105-125 (FHRL…LYFL), 141-161 (IFLL…SGLV), 173-193 (AHLG…LDLL), and 212-232 (STML…VAGI). His-274 contacts heme. A run of 3 helical transmembrane segments spans residues 276–296 (LIAW…RAVP), 307–327 (LLLI…LLVV), and 329–349 (LTLA…ALWV). His-335 contributes to the heme binding site.

Belongs to the COX15/CtaA family. Type 2 subfamily. Interacts with CtaB. Heme b is required as a cofactor.

The protein localises to the cell membrane. The enzyme catalyses Fe(II)-heme o + 2 A + H2O = Fe(II)-heme a + 2 AH2. Its pathway is porphyrin-containing compound metabolism; heme A biosynthesis; heme A from heme O: step 1/1. Functionally, catalyzes the conversion of heme O to heme A by two successive hydroxylations of the methyl group at C8. The first hydroxylation forms heme I, the second hydroxylation results in an unstable dihydroxymethyl group, which spontaneously dehydrates, resulting in the formyl group of heme A. The polypeptide is Heme A synthase (Nitrosospira multiformis (strain ATCC 25196 / NCIMB 11849 / C 71)).